Reading from the N-terminus, the 527-residue chain is Bifunctional purine biosynthesis protein PurH (527 aa).

Residues 8 to 156 (AGAKRPIRRA…KNHPSVAVVV (149 aa)) form the MGS-like domain.

The protein belongs to the PurH family.

It catalyses the reaction (6R)-10-formyltetrahydrofolate + 5-amino-1-(5-phospho-beta-D-ribosyl)imidazole-4-carboxamide = 5-formamido-1-(5-phospho-D-ribosyl)imidazole-4-carboxamide + (6S)-5,6,7,8-tetrahydrofolate. The catalysed reaction is IMP + H2O = 5-formamido-1-(5-phospho-D-ribosyl)imidazole-4-carboxamide. The protein operates within purine metabolism; IMP biosynthesis via de novo pathway; 5-formamido-1-(5-phospho-D-ribosyl)imidazole-4-carboxamide from 5-amino-1-(5-phospho-D-ribosyl)imidazole-4-carboxamide (10-formyl THF route): step 1/1. Its pathway is purine metabolism; IMP biosynthesis via de novo pathway; IMP from 5-formamido-1-(5-phospho-D-ribosyl)imidazole-4-carboxamide: step 1/1. The sequence is that of Bifunctional purine biosynthesis protein PurH from Mycobacterium sp. (strain KMS).